The chain runs to 217 residues: GRB2-related adapter protein (217 aa).

Positions 1–58 constitute an SH3 1 domain; that stretch reads MESVALYSFQATESDELAFNKGDTLKILNMEDDQNWYKAELRGVEGFIPKNYIRVKPH. The SH2 domain maps to 60-154; that stretch reads WYSGRISRQL…QIFLRDEEPL (95 aa). Residues 158–217 enclose the SH3 2 domain; that stretch reads PGACFAQAQFDFSAQDPSQLSFRRGDIIEVLERPDPHWWRGRSCGRVGFFPRSYVQPVHL.

The protein belongs to the GRB2/sem-5/DRK family. Associates through its SH2 domain with ligand-activated receptors for stem cell factor (KIT) and erythropoietin (EPOR). Also forms a stable complex with the Bcr-Abl oncoprotein. GRAP is associated with the Ras guanine nucleotide exchange factor SOS1, primarily through its N-terminal SH3 domain. Interacts with phosphorylated LAT upon TCR activation. Interacts with SHB.

The protein localises to the membrane. It is found in the synapse. Couples signals from receptor and cytoplasmic tyrosine kinases to the Ras signaling pathway. Plays a role in the inner ear and in hearing. The polypeptide is GRB2-related adapter protein (Homo sapiens (Human)).